The sequence spans 856 residues: MGSLFRSESMCLAQLFLQSGTAYECLSALGEKGLVQFRDLNQNVSSFQRKFVGEVKRCEELERILVYLVQEITRADIPLPEGEASPPAPPLKHVLEMQEQLQKLEVELREVTKNKEKLRKNLLELVEYTHMLRVTKTFLKRNVEFEPTYEEFPALENDSLLDYSCMQRLGAKLGFVSGLIQQGRVEAFERMLWRACKGYTIVTYAELDECLEDPETGEVIKWYVFLISFWGEQIGHKVKKICDCYHCHIYPYPNTAEERREIQEGLNTRIQDLYTVLHKTEDYLRQVLCKAAESVCSRVVQVRKMKAIYHMLNMCSFDVTNKCLIAEVWCPEVDLPGLRRALEEGSRESGATIPSFMNTIPTKETPPTLIRTNKFTEGFQNIVDAYGVGSYREVNPALFTIITFPFLFAVMFGDFGHGFVMFLFALLLVLNENHPRLSQSQEILRMFFDGRYILLLMGLFSVYTGLIYNDCFSKSVNLFGSGWNVSAMYSSSHSPEEQRKMVLWNDSTIRHSRTLQLDPNIPGVFRGPYPFGIDPIWNLATNRLTFLNSFKMKMSVILGIFHMTFGVVLGIFNHLHFRKKFNVYLVSVPEILFMLCIFGYLIFMIIYKWLAYSAETSREAPSILIEFINMFLFPTSKTHGLYPGQAHVQRVLVALTVLAVPVLFLGKPLFLLWLHNGRNCFGMSRSGYTLVRKDSEEEVSLLGNQDIEEGNSRMEEGCREVTCEEFNFGEILMTQAIHSIEYCLGCISNTASYLRLWALSLAHAQLSDVLWAMLMRVGLRVDTTYGVLLLLPVMAFFAVLTIFILLVMEGLSAFLHAIRLHWVEFQNKFYVGAGTKFVPFSFSLLSSKFSNDDSIA.

The Cytoplasmic segment spans residues 1-393 (MGSLFRSESM…DAYGVGSYRE (393 aa)). A helical membrane pass occupies residues 394–412 (VNPALFTIITFPFLFAVMF). Residues 413 to 414 (GD) lie on the Vacuolar side of the membrane. The chain crosses the membrane as a helical span at residues 415–431 (FGHGFVMFLFALLLVLN). The Cytoplasmic segment spans residues 432-445 (ENHPRLSQSQEILR). The chain crosses the membrane as a helical span at residues 446–475 (MFFDGRYILLLMGLFSVYTGLIYNDCFSKS). Residues 476–549 (VNLFGSGWNV…ATNRLTFLNS (74 aa)) lie on the Vacuolar side of the membrane. The chain crosses the membrane as a helical span at residues 550–569 (FKMKMSVILGIFHMTFGVVL). Residues 570–587 (GIFNHLHFRKKFNVYLVS) are Cytoplasmic-facing. The helical transmembrane segment at 588 to 608 (VPEILFMLCIFGYLIFMIIYK) threads the bilayer. Topologically, residues 609–651 (WLAYSAETSREAPSILIEFINMFLFPTSKTHGLYPGQAHVQRV) are vacuolar. Residues 652 to 671 (LVALTVLAVPVLFLGKPLFL) traverse the membrane as a helical segment. At 672-739 (LWLHNGRNCF…EILMTQAIHS (68 aa)) the chain is on the cytoplasmic side. 2 positions are modified to phosphoserine: S695 and S700. The helical transmembrane segment at 740–764 (IEYCLGCISNTASYLRLWALSLAHA) threads the bilayer. Residues 765–785 (QLSDVLWAMLMRVGLRVDTTY) are Vacuolar-facing. Residues 786–824 (GVLLLLPVMAFFAVLTIFILLVMEGLSAFLHAIRLHWVE) traverse the membrane as a helical segment. Over 825-856 (FQNKFYVGAGTKFVPFSFSLLSSKFSNDDSIA) the chain is Cytoplasmic.

The protein belongs to the V-ATPase 116 kDa subunit family. V-ATPase is a heteromultimeric enzyme made up of two complexes: the ATP-hydrolytic V1 complex and the proton translocation V0 complex. The V1 complex consists of three catalytic AB heterodimers that form a heterohexamer, three peripheral stalks each consisting of EG heterodimers, one central rotor including subunits D and F, and the regulatory subunits C and H. The proton translocation complex V0 consists of the proton transport subunit a, a ring of proteolipid subunits c9c'', rotary subunit d, subunits e and f, and the accessory subunits ATP6AP1/Ac45 and ATP6AP2/PRR. Directly interacts with PSCD2 through its N-terminal cytosolic tail in an intra-endosomal acidification-dependent manner. Disruption of this interaction results in the inhibition of endocytosis. Interacts with SPAAR. In terms of tissue distribution, relatively high expression in kidney and liver. Lower levels in the spleen, testis, and skeletal muscle. Also expressed in the thymus.

It is found in the cell membrane. The protein localises to the endosome membrane. In terms of biological role, subunit of the V0 complex of vacuolar(H+)-ATPase (V-ATPase), a multisubunit enzyme composed of a peripheral complex (V1) that hydrolyzes ATP and a membrane integral complex (V0) that translocates protons. V-ATPase is responsible for acidifying and maintaining the pH of intracellular compartments and in some cell types, is targeted to the plasma membrane, where it is responsible for acidifying the extracellular environment. Essential component of the endosomal pH-sensing machinery. May play a role in maintaining the Golgi functions, such as glycosylation maturation, by controlling the Golgi pH. In aerobic conditions, involved in intracellular iron homeostasis, thus triggering the activity of Fe(2+) prolyl hydroxylase (PHD) enzymes, and leading to HIF1A hydroxylation and subsequent proteasomal degradation. The protein is V-type proton ATPase 116 kDa subunit a 2 (Atp6v0a2) of Mus musculus (Mouse).